The sequence spans 362 residues: MTELLKTPIHPLYAKYGAKTIDFGGWDLPVQFAGIKAEHEAVRTDAGLFDVSHMGEILVKGPDSTSYLQYLLTNDIEKIKIGKAQYNIMCYETGGTVDDLVVYKKSETEYILVVNAANTDKDFEWMVKNIRGDVSVTNVSSEYGQLALQGPNAEKILAKLTDVDLSSISFFGFVEDADVAGVKTIISRSGYTGEDGFEIYMPSADAGKVFEAILAEGVAPIGLGARDTLRLEAVLALYGQELSKDITPLEAGLNFAVKLKKEADFIGKEALIKQKEVGLNRKLVGIELIERGIPRHDYPVFLNEEEIGIVTSGTQSPTLGTNIGLALIDTAYTEIGQEVEVGIRNKKVKAKIVPTPFYKRAK.

This sequence belongs to the GcvT family. The glycine cleavage system is composed of four proteins: P, T, L and H.

The enzyme catalyses N(6)-[(R)-S(8)-aminomethyldihydrolipoyl]-L-lysyl-[protein] + (6S)-5,6,7,8-tetrahydrofolate = N(6)-[(R)-dihydrolipoyl]-L-lysyl-[protein] + (6R)-5,10-methylene-5,6,7,8-tetrahydrofolate + NH4(+). In terms of biological role, the glycine cleavage system catalyzes the degradation of glycine. The polypeptide is Aminomethyltransferase (Listeria monocytogenes serotype 4b (strain CLIP80459)).